Consider the following 772-residue polypeptide: Hyperosmolality-gated Ca2+ permeable channel 1.1 (772 aa).

At 1–5 (MATLK) the chain is on the extracellular side. A helical membrane pass occupies residues 6–28 (DIGVSAGINILTAFIFFIIFAFL). The Cytoplasmic segment spans residues 29–100 (RLQPFNDRVY…AGLDSVVYLR (72 aa)). The chain crosses the membrane as a helical span at residues 101–122 (IYWLGLKIFAPIAMLAWAVLVP). The Extracellular segment spans residues 123–159 (VNWTNNELELAKHFKNVTSSDIDKLTISNIPEGSNRF). Asn138 is a glycosylation site (N-linked (GlcNAc) asparagine). Residues 160–180 (WAHIIMAYAFTIWTCYMLMKE) form a helical membrane-spanning segment. Residues 181–372 (YETVANMRLQ…PNLAIPYVSL (192 aa)) lie on the Cytoplasmic side of the membrane. Residues 339-344 (QTTQTR) form a cytoplasmic region required for homodimerization region. A helical transmembrane segment spans residues 373 to 398 (TVRRLVMNVAFFFLTFFFIIPIAFVQ). The Extracellular portion of the chain corresponds to 399–424 (SLATIEGIEKVAPFLKVIIEKDFIKS). A helical transmembrane segment spans residues 425–450 (LIQGLLAGIALKLFLIFLPAILMTMS). The Cytoplasmic portion of the chain corresponds to 451 to 461 (KFEGFTSVSFL). Residues 462-485 (ERRSASRYYIFNLVNVFLGSVIAG) traverse the membrane as a helical segment. Topologically, residues 486-509 (AAFEQLNSFLNQSPNQIPKTIGMA) are extracellular. Residues 510–538 (IPMKATFFITYIMVDGWAGVAGEILMLKP) form a helical membrane-spanning segment. Over 539 to 566 (LIIYHLKNAFLVKTEKDREEAMNPGSIG) the chain is Cytoplasmic. The helical transmembrane segment at 567-587 (FNTGEPQIQLYFLLGLVYAPV) threads the bilayer. Thr588 is a topological domain (extracellular). The helical transmembrane segment at 589–606 (PMLLPFILVFFALAYVVY) threads the bilayer. Topologically, residues 607-624 (RHQIINVYNQEYESAAAF) are cytoplasmic. Residues 625–647 (WPDVHGRVITALIISQLLLMGLL) traverse the membrane as a helical segment. Residues 648 to 653 (GTKHAA) lie on the Extracellular side of the membrane. A helical transmembrane segment spans residues 654–674 (SAAPFLIALPVITIGFHRFCK). Residues 675–772 (GRFEPAFVRY…SLAVINGKEV (98 aa)) are Cytoplasmic-facing. Residues 686–688 (LQE) are cytoplasmic region required for homodimerization. Residues 743 to 772 (KRQSRRNTPAPSRISGESSPSLAVINGKEV) are disordered. Residues 748–763 (RNTPAPSRISGESSPS) show a composition bias toward polar residues.

The protein belongs to the CSC1 (TC 1.A.17) family. Homodimer. In terms of tissue distribution, expressed in leaves, flowers, roots and guard cells.

It localises to the cell membrane. Activated by mechanical pressure. In terms of biological role, acts as a hyperosmolarity-gated non-selective cation channel that permeates Ca(2+) ions. Shows the following permeability sequence: K(+) &gt; Ba(2+) = Ca(2+) &gt; Na(+) = Mg(2+) = Cs(+). Mechanosensitive ion channel that converts mechanical stimuli into a flow of ions: activated in response to membrane stretch and poke. This Arabidopsis thaliana (Mouse-ear cress) protein is Hyperosmolality-gated Ca2+ permeable channel 1.1.